The following is a 159-amino-acid chain: MKIKLICVGKLKEAYLRDGIAEYQKRLSRFCQCDIIELADEKTPDKASDAEKQQIMAKEADRIKKKLGQRDFVIALAIEGKQLASEQFSHLLSEVTVKGYSDIAFVIGGSLGLDQSIKNRANLLMSFGLLTLPHQLMRLVLIEQVYRAFMIQQGSPYHK.

S-adenosyl-L-methionine contacts are provided by residues Leu76, Gly108, and 127-132 (FGLLTL).

The protein belongs to the RNA methyltransferase RlmH family. As to quaternary structure, homodimer.

It localises to the cytoplasm. It catalyses the reaction pseudouridine(1915) in 23S rRNA + S-adenosyl-L-methionine = N(3)-methylpseudouridine(1915) in 23S rRNA + S-adenosyl-L-homocysteine + H(+). Functionally, specifically methylates the pseudouridine at position 1915 (m3Psi1915) in 23S rRNA. This is Ribosomal RNA large subunit methyltransferase H from Streptococcus equi subsp. zooepidemicus (strain MGCS10565).